The following is a 372-amino-acid chain: Putative glutamate--cysteine ligase 2 (372 aa).

Belongs to the glutamate--cysteine ligase type 2 family. YbdK subfamily. Homodimer.

It catalyses the reaction L-cysteine + L-glutamate + ATP = gamma-L-glutamyl-L-cysteine + ADP + phosphate + H(+). ATP-dependent carboxylate-amine ligase which exhibits weak glutamate--cysteine ligase activity. In Escherichia coli (strain K12 / MC4100 / BW2952), this protein is Putative glutamate--cysteine ligase 2 (ybdK).